A 446-amino-acid polypeptide reads, in one-letter code: MAAQVTDALKNLKVKDPNSVIESAAEAKSNGNTQAEAEDSDDEEEEPVNGEGAGEGGAKKKRKRKKKPKKKAGANPKVQSSPPRVLLSNLFPSGEYPVGEEVEYRDENNYRTTSEEKRYLDRMNNDFLQEYRQAAEIHRQVRQYAKANIKPGQTLTEIAEGIEDSVRALTGHPGLEEGDNIKGGVAFPTGVNLDHIAAHYSPNAGNKTVLAYENVMKVDFGVHVNGRIVDSAFTIAFDPMYDNLLEAVKQATNTGIKEAGIDARLGEIGEHIQETMESYEVEIKGQTYQVKPIRNLNGHDILQWKIHGGKSVPIVKSNDQTKMEEGEVFAIETFGSTGNGYVRDDLECSHYAKVADAPNVPLRIASAGKLLNVINKNFGTLPFCRRYLDRLGQDKYLLGLNALVSHGIVQDYPPLVDKKGSYTAQFEHTIVLRPNCKEVISRGDDY.

The tract at residues 1-91 (MAAQVTDALK…PPRVLLSNLF (91 aa)) is disordered. The segment covering 36–48 (EAEDSDDEEEEPV) has biased composition (acidic residues). The span at 59–72 (KKKRKRKKKPKKKA) shows a compositional bias: basic residues. His-199 provides a ligand contact to substrate. 3 residues coordinate a divalent metal cation: Asp-219, Asp-230, and His-299. His-307 lines the substrate pocket. A divalent metal cation-binding residues include Glu-332 and Glu-427.

This sequence belongs to the peptidase M24A family. Methionine aminopeptidase eukaryotic type 2 subfamily. Co(2+) is required as a cofactor. Requires Zn(2+) as cofactor. The cofactor is Mn(2+). Fe(2+) serves as cofactor.

The protein resides in the cytoplasm. The catalysed reaction is Release of N-terminal amino acids, preferentially methionine, from peptides and arylamides.. Cotranslationally removes the N-terminal methionine from nascent proteins. The N-terminal methionine is often cleaved when the second residue in the primary sequence is small and uncharged (Met-Ala-, Cys, Gly, Pro, Ser, Thr, or Val). The chain is Methionine aminopeptidase 2 from Sclerotinia sclerotiorum (strain ATCC 18683 / 1980 / Ss-1) (White mold).